A 256-amino-acid chain; its full sequence is Cell division protein ZipA (256 aa).

Residues 1–6 (MQYGRQ) lie on the Periplasmic side of the membrane. Residues 7 to 27 (ILICIGILTVIILLLYGLLNS) traverse the membrane as a helical segment. Residues 28–256 (YWDRTVTFCK…RHVLSANKST (229 aa)) are Cytoplasmic-facing.

It belongs to the ZipA family. Interacts with FtsZ via their C-terminal domains.

It is found in the cell inner membrane. Essential cell division protein that stabilizes the FtsZ protofilaments by cross-linking them and that serves as a cytoplasmic membrane anchor for the Z ring. Also required for the recruitment to the septal ring of downstream cell division proteins. In Baumannia cicadellinicola subsp. Homalodisca coagulata, this protein is Cell division protein ZipA.